The primary structure comprises 54 residues: Ribulose bisphosphate carboxylase large chain (54 aa).

Residues 1–2 constitute a propeptide that is removed on maturation; it reads MS. Proline 3 carries the post-translational modification N-acetylproline. Lysine 14 carries the post-translational modification N6,N6,N6-trimethyllysine.

It belongs to the RuBisCO large chain family. Type I subfamily. As to quaternary structure, heterohexadecamer of 8 large chains and 8 small chains.

The protein resides in the plastid. It is found in the chloroplast. The catalysed reaction is 2 (2R)-3-phosphoglycerate + 2 H(+) = D-ribulose 1,5-bisphosphate + CO2 + H2O. It carries out the reaction D-ribulose 1,5-bisphosphate + O2 = 2-phosphoglycolate + (2R)-3-phosphoglycerate + 2 H(+). Functionally, ruBisCO catalyzes two reactions: the carboxylation of D-ribulose 1,5-bisphosphate, the primary event in carbon dioxide fixation, as well as the oxidative fragmentation of the pentose substrate in the photorespiration process. Both reactions occur simultaneously and in competition at the same active site. In Geum borisii (Avens), this protein is Ribulose bisphosphate carboxylase large chain (rbcL).